The chain runs to 91 residues: DNA-binding protein HRL53 (91 aa).

A disordered region spans residues 57–91 (ATKGRNPSTGAEVDIPARNVPKFTPGKGLKDAVNG).

It belongs to the bacterial histone-like protein family.

Its function is as follows. Histone-like DNA-binding protein which is capable of wrapping DNA to stabilize it, and thus to prevent its denaturation under extreme environmental conditions. Binds to nod promoters and induces DNA binding. In Rhizobium leguminosarum, this protein is DNA-binding protein HRL53.